Consider the following 320-residue polypeptide: NAC domain-containing protein 18 (320 aa).

Residues 1–22 form a disordered region; that stretch reads MESTDSSGGPPPPQPNLPPGFR. Residues 9 to 18 show a composition bias toward pro residues; that stretch reads GPPPPQPNLP. The region spanning 17–177 is the NAC domain; that stretch reads LPPGFRFHPT…DWVLCRIYKK (161 aa). Residues 118–183 mediate DNA binding; sequence VGVKKALVFY…IYKKNNSTAS (66 aa).

Restricted primarily to the region of the embryo including the SAM. Expressed in the outer integument, but seems not expressed in the embryo at the torpedo stage.

The protein localises to the nucleus. Its function is as follows. May encode a transcription factor involved in the elaboration of shoot apical meristems (SAM). Together with NAC056/NARS1, regulates embryogenesis by regulating the development and degeneration of ovule integuments, a process required for intertissue communication between the embryo and the maternal integument. The polypeptide is NAC domain-containing protein 18 (NAC018) (Arabidopsis thaliana (Mouse-ear cress)).